The chain runs to 214 residues: Putative ankyrin repeat protein RF_1081 (214 aa).

A compositionally biased stretch (polar residues) spans 1–14; it reads MRKQQIPTLSTSAL. Residues 1–32 form a disordered region; the sequence is MRKQQIPTLSTSALDKSPGPGSPDSDIEMKST. The stretch at 67–135 is one ANK repeat; the sequence is NPNALLHEAA…EEPILVTKKD (69 aa).

The protein is Putative ankyrin repeat protein RF_1081 of Rickettsia felis (strain ATCC VR-1525 / URRWXCal2) (Rickettsia azadi).